Consider the following 244-residue polypeptide: Myrosinase MB1 (244 aa).

N-linked (GlcNAc...) asparagine glycosylation occurs at Asn-32. Tyr-51 lines the substrate pocket. The active-site Nucleophile is Glu-125. Substrate-binding positions include Trp-173 and 180 to 181 (EF). An N-linked (GlcNAc...) asparagine glycan is attached at Asn-216.

It belongs to the glycosyl hydrolase 1 family. Homodimer. In terms of tissue distribution, in vacuoles called myrosin grains of a certain class of cells, myrosin cells, distributed in the cotyledons and the axis of the embryo as well as in different organs of the growing plant.

It localises to the vacuole. The enzyme catalyses a thioglucoside + H2O = a sugar + a thiol.. In terms of biological role, degradation of glucosinolates (glucose residue linked by a thioglucoside bound to an amino acid derivative) to glucose, sulfate and any of the products: thiocyanates, isothiocyanates, nitriles, epithionitriles or oxazolidine-2-thiones. The protein is Myrosinase MB1 of Sinapis alba (White mustard).